Reading from the N-terminus, the 922-residue chain is Lysine-specific demethylase 4 (922 aa).

The span at 1–15 (MASAATTTHFPSSRI) shows a compositional bias: polar residues. Disordered regions lie at residues 1–21 (MASA…EPCA) and 42–61 (SSSC…MFTD). The JmjN domain maps to 87-130 (VLTFYPTMREFKNFSQYIKKIEQNGGHLKAGIAKIVAPEGWTPR). Tyr-213 serves as a coordination point for 2-oxoglutarate. The 166-residue stretch at 223 to 388 (DAQVEEWNMN…YGKDAVLCDC (166 aa)) folds into the JmjC domain. His-265 and Glu-267 together coordinate Fe cation. Positions 275 and 283 each coordinate 2-oxoglutarate. Positions 314 and 320 each coordinate Zn(2+). Residue Lys-321 coordinates 2-oxoglutarate. His-356 serves as a coordination point for Fe cation. Residues Cys-386 and Cys-388 each contribute to the Zn(2+) site. The disordered stretch occupies residues 435–475 (KRRQSLADASKIAKRARLGASSTATDSDGSSGSSGSEEATE). Positions 453-475 (GASSTATDSDGSSGSSGSEEATE) are enriched in low complexity. The segment at 639–675 (TTSCQLCELRGGALIPCQIGTDSTWAHVACALFNRRA) adopts a C2HC pre-PHD-type zinc-finger fold. The PHD-type; degenerate zinc finger occupies 723–783 (WECVVCHRTD…GVVMICHKHE (61 aa)).

This sequence belongs to the JHDM3 histone demethylase family. It depends on Fe(2+) as a cofactor.

The protein localises to the nucleus. It catalyses the reaction N(6),N(6),N(6)-trimethyl-L-lysyl(9)-[histone H3] + 2 2-oxoglutarate + 2 O2 = N(6)-methyl-L-lysyl(9)-[histone H3] + 2 formaldehyde + 2 succinate + 2 CO2. It carries out the reaction N(6),N(6),N(6)-trimethyl-L-lysyl(36)-[histone H3] + 2 2-oxoglutarate + 2 O2 = N(6)-methyl-L-lysyl(36)-[histone H3] + 2 formaldehyde + 2 succinate + 2 CO2. Histone demethylase that specifically demethylates 'Lys-9' and 'Lys-36' residues of histone H3, thereby playing a central role in histone code. Demethylation of Lys residue generates formaldehyde and succinate. Involved in the negative regulation of lifespan in a germline-dependent fashion. The polypeptide is Lysine-specific demethylase 4 (jmjd-2) (Caenorhabditis elegans).